Reading from the N-terminus, the 259-residue chain is 5'-nucleotidase SurE (259 aa).

Positions 8, 9, 40, and 92 each coordinate a divalent metal cation.

Belongs to the SurE nucleotidase family. A divalent metal cation is required as a cofactor.

The protein resides in the cytoplasm. The catalysed reaction is a ribonucleoside 5'-phosphate + H2O = a ribonucleoside + phosphate. Nucleotidase that shows phosphatase activity on nucleoside 5'-monophosphates. The chain is 5'-nucleotidase SurE from Xanthomonas axonopodis pv. citri (strain 306).